The primary structure comprises 480 residues: Transposase for transposon Tn552 (480 aa).

A DNA-binding region (H-T-H motif) is located at residues 36-55 (LSSISKSKGIALSTLYRWNK). Positions 155 to 341 (ESSRPNEIWQ…TPINRWNSNH (187 aa)) constitute an Integrase catalytic domain. Residues 438–480 (RKHLKQNIASPSTTDLIKEEKSYGYSPQETTKNVKKLKRYRND) are disordered. Residues 470–480 (NVKKLKRYRND) show a composition bias toward basic residues.

This is Transposase for transposon Tn552 from Staphylococcus aureus.